We begin with the raw amino-acid sequence, 519 residues long: Probable cytosol aminopeptidase (519 aa).

The Mn(2+) site is built by Lys283 and Asp288. Residue Lys295 is part of the active site. Mn(2+) contacts are provided by Asp306, Asp365, and Glu367. Arg369 is a catalytic residue.

This sequence belongs to the peptidase M17 family. Mn(2+) serves as cofactor.

It is found in the cytoplasm. It catalyses the reaction Release of an N-terminal amino acid, Xaa-|-Yaa-, in which Xaa is preferably Leu, but may be other amino acids including Pro although not Arg or Lys, and Yaa may be Pro. Amino acid amides and methyl esters are also readily hydrolyzed, but rates on arylamides are exceedingly low.. It carries out the reaction Release of an N-terminal amino acid, preferentially leucine, but not glutamic or aspartic acids.. Presumably involved in the processing and regular turnover of intracellular proteins. Catalyzes the removal of unsubstituted N-terminal amino acids from various peptides. In Mycobacterium ulcerans (strain Agy99), this protein is Probable cytosol aminopeptidase.